The following is a 227-amino-acid chain: Orotidine 5'-phosphate decarboxylase (227 aa).

Residues Asp12, Lys34, 61-70, Thr117, Arg178, Gln187, Gly207, and Arg208 contribute to the substrate site; that span reads DLKLHDIPNT. Catalysis depends on Lys63, which acts as the Proton donor.

This sequence belongs to the OMP decarboxylase family. Type 1 subfamily. Homodimer.

It catalyses the reaction orotidine 5'-phosphate + H(+) = UMP + CO2. It participates in pyrimidine metabolism; UMP biosynthesis via de novo pathway; UMP from orotate: step 2/2. Its function is as follows. Catalyzes the decarboxylation of orotidine 5'-monophosphate (OMP) to uridine 5'-monophosphate (UMP). This is Orotidine 5'-phosphate decarboxylase from Anaeromyxobacter dehalogenans (strain 2CP-1 / ATCC BAA-258).